We begin with the raw amino-acid sequence, 427 residues long: Glutamate-1-semialdehyde 2,1-aminomutase (427 aa).

Lys-265 bears the N6-(pyridoxal phosphate)lysine mark.

Belongs to the class-III pyridoxal-phosphate-dependent aminotransferase family. HemL subfamily. Homodimer. Pyridoxal 5'-phosphate serves as cofactor.

Its subcellular location is the cytoplasm. The catalysed reaction is (S)-4-amino-5-oxopentanoate = 5-aminolevulinate. It participates in porphyrin-containing compound metabolism; protoporphyrin-IX biosynthesis; 5-aminolevulinate from L-glutamyl-tRNA(Glu): step 2/2. The sequence is that of Glutamate-1-semialdehyde 2,1-aminomutase from Bordetella pertussis (strain Tohama I / ATCC BAA-589 / NCTC 13251).